A 211-amino-acid polypeptide reads, in one-letter code: Cytidylate kinase (211 aa).

Gly7–Thr15 lines the ATP pocket.

It belongs to the cytidylate kinase family. Type 1 subfamily.

The protein resides in the cytoplasm. The enzyme catalyses CMP + ATP = CDP + ADP. It carries out the reaction dCMP + ATP = dCDP + ADP. This is Cytidylate kinase from Rhodopseudomonas palustris (strain BisA53).